The following is a 563-amino-acid chain: Methylcrotonoyl-CoA carboxylase beta chain, mitochondrial (563 aa).

Residues 1-22 (MWAVLRLALRPCARASPAGPRA) constitute a mitochondrion transit peptide. A CoA carboxyltransferase N-terminal domain is found at 49 to 306 (MKALVNQLHE…QKKLDVTIEP (258 aa)). Residues 49-555 (MKALVNQLHE…SAALNAPIEK (507 aa)) are carboxyltransferase. At Lys-70 the chain carries N6-acetyllysine; alternate. The residue at position 70 (Lys-70) is an N6-succinyllysine; alternate. An N6-succinyllysine modification is found at Lys-141. In terms of domain architecture, CoA carboxyltransferase C-terminal spans 309–555 (EPLFPADELY…SAALNAPIEK (247 aa)). The interval 343-372 (RFTEFKAFYGDTLVTGFARIFGYPVGIVGN) is acyl-CoA binding. Lys-495 carries the post-translational modification N6-acetyllysine; alternate. Lys-495 carries the post-translational modification N6-succinyllysine; alternate. Lys-511 carries the N6-acetyllysine modification.

This sequence belongs to the AccD/PCCB family. In terms of assembly, probably a dodecamer composed of six biotin-containing alpha subunits (MCCC1) and six beta (MCCC2) subunits.

The protein resides in the mitochondrion matrix. The catalysed reaction is 3-methylbut-2-enoyl-CoA + hydrogencarbonate + ATP = 3-methyl-(2E)-glutaconyl-CoA + ADP + phosphate + H(+). It functions in the pathway amino-acid degradation; L-leucine degradation; (S)-3-hydroxy-3-methylglutaryl-CoA from 3-isovaleryl-CoA: step 2/3. In terms of biological role, carboxyltransferase subunit of the 3-methylcrotonyl-CoA carboxylase, an enzyme that catalyzes the conversion of 3-methylcrotonyl-CoA to 3-methylglutaconyl-CoA, a critical step for leucine and isovaleric acid catabolism. The protein is Methylcrotonoyl-CoA carboxylase beta chain, mitochondrial (MCCC2) of Homo sapiens (Human).